Consider the following 470-residue polypeptide: Glutamyl-tRNA reductase (470 aa).

Residues 49–52 (TCNR), Ser-109, 114–116 (ESQ), and Gln-120 each bind substrate. Cys-50 (nucleophile) is an active-site residue. An NADP(+)-binding site is contributed by 223 to 228 (GAGAVG).

It belongs to the glutamyl-tRNA reductase family. In terms of assembly, homodimer.

The catalysed reaction is (S)-4-amino-5-oxopentanoate + tRNA(Glu) + NADP(+) = L-glutamyl-tRNA(Glu) + NADPH + H(+). Its pathway is porphyrin-containing compound metabolism; protoporphyrin-IX biosynthesis; 5-aminolevulinate from L-glutamyl-tRNA(Glu): step 1/2. Functionally, catalyzes the NADPH-dependent reduction of glutamyl-tRNA(Glu) to glutamate 1-semialdehyde (GSA). The sequence is that of Glutamyl-tRNA reductase from Frankia alni (strain DSM 45986 / CECT 9034 / ACN14a).